The chain runs to 388 residues: Sporulation-specific mitogen-activated protein kinase SMK1 (388 aa).

The region spanning 38–337 (YEIIQFLGKG…VEQAISHPFL (300 aa)) is the Protein kinase domain. ATP-binding positions include 44 to 52 (LGKGAYGTV) and Lys69. Asp166 functions as the Proton acceptor in the catalytic mechanism. Residues 207–209 (TNY) carry the TXY motif.

Belongs to the protein kinase superfamily. CMGC Ser/Thr protein kinase family. MAP kinase subfamily. Interacts with GSC2. It depends on Mg(2+) as a cofactor. In terms of processing, dually phosphorylated on Thr-207 and Tyr-209, which activates the enzyme.

The enzyme catalyses L-seryl-[protein] + ATP = O-phospho-L-seryl-[protein] + ADP + H(+). It catalyses the reaction L-threonyl-[protein] + ATP = O-phospho-L-threonyl-[protein] + ADP + H(+). Activated by tyrosine and threonine phosphorylation. Its function is as follows. Required for spore wall assembly. Required for proper deposition of the two outer layers of the spore wall, the chitosan and dityrosine layers. Negatively regulates GSC2, an alternate catalytic subunit of the 1,3-beta-glucan synthase (GS). Participates in a developmentally regulated signal transduction pathway that coordinates cytodifferentiation events with the transcriptional program. The protein is Sporulation-specific mitogen-activated protein kinase SMK1 (SMK1) of Saccharomyces cerevisiae (strain ATCC 204508 / S288c) (Baker's yeast).